Consider the following 466-residue polypeptide: tRNA modification GTPase MnmE (466 aa).

3 residues coordinate (6S)-5-formyl-5,6,7,8-tetrahydrofolate: R24, E85, and K128. A TrmE-type G domain is found at 224-384 (GLNIVLAGQP…LRTELLHLVG (161 aa)). Residue N234 participates in K(+) binding. Residues 234-239 (NVGKSS), 253-259 (TPIAGTT), and 278-281 (DTAG) contribute to the GTP site. S238 contacts Mg(2+). Residues T253, I255, and T258 each coordinate K(+). T259 lines the Mg(2+) pocket. K466 lines the (6S)-5-formyl-5,6,7,8-tetrahydrofolate pocket.

This sequence belongs to the TRAFAC class TrmE-Era-EngA-EngB-Septin-like GTPase superfamily. TrmE GTPase family. Homodimer. Heterotetramer of two MnmE and two MnmG subunits. Requires K(+) as cofactor.

The protein localises to the cytoplasm. In terms of biological role, exhibits a very high intrinsic GTPase hydrolysis rate. Involved in the addition of a carboxymethylaminomethyl (cmnm) group at the wobble position (U34) of certain tRNAs, forming tRNA-cmnm(5)s(2)U34. The chain is tRNA modification GTPase MnmE from Herminiimonas arsenicoxydans.